Consider the following 449-residue polypeptide: Adenylosuccinate synthetase (449 aa).

GTP-binding positions include 37–43 (GDEGKGK) and 65–67 (GHT). Aspartate 38 acts as the Proton acceptor in catalysis. Mg(2+) contacts are provided by aspartate 38 and glycine 65. IMP contacts are provided by residues 38–41 (DEGK), 63–66 (NAGH), threonine 155, arginine 169, asparagine 247, threonine 262, and arginine 326. Histidine 66 acts as the Proton donor in catalysis. 322–328 (VTTKRKR) provides a ligand contact to substrate. GTP is bound by residues arginine 328, 354–356 (KLD), and 437–439 (GVG).

Belongs to the adenylosuccinate synthetase family. Homodimer. Requires Mg(2+) as cofactor.

The protein localises to the cytoplasm. It catalyses the reaction IMP + L-aspartate + GTP = N(6)-(1,2-dicarboxyethyl)-AMP + GDP + phosphate + 2 H(+). It functions in the pathway purine metabolism; AMP biosynthesis via de novo pathway; AMP from IMP: step 1/2. In terms of biological role, plays an important role in the de novo pathway and in the salvage pathway of purine nucleotide biosynthesis. Catalyzes the first committed step in the biosynthesis of AMP from IMP. This Drosophila willistoni (Fruit fly) protein is Adenylosuccinate synthetase.